Reading from the N-terminus, the 204-residue chain is Probable GTP-binding protein EngB (204 aa).

An EngB-type G domain is found at 27–201 (SGIEIAFAGR…SEKLDQWFSP (175 aa)). GTP is bound by residues 35–42 (GRSNAGKS), 62–66 (GRTQL), 80–83 (DLPG), 147–150 (TKAD), and 180–182 (FSA). The Mg(2+) site is built by Ser42 and Thr64.

The protein belongs to the TRAFAC class TrmE-Era-EngA-EngB-Septin-like GTPase superfamily. EngB GTPase family. Mg(2+) serves as cofactor.

In terms of biological role, necessary for normal cell division and for the maintenance of normal septation. The chain is Probable GTP-binding protein EngB from Histophilus somni (strain 129Pt) (Haemophilus somnus).